We begin with the raw amino-acid sequence, 217 residues long: MDIISVALKRHSTKAFDASKKLTAEEAEKIKTLLQYSPSSTNSQPWHFIVASTEEGKARVAKSAAGTYVFNERKMLDASHVVVFCAKTAMDDAWLERVVDQEEADGRFNTPEAKAANHKGRTYFADMHRVDLKDDDQWMAKQVYLNVGNFLLGVGAMGLDAVPIEGFDAAILDEEFGLKEKGFTSLVVVPVGHHSVEDFNATLPKSRLPLSTIVTEC.

Residue 10–14 (RHSTK) participates in FMN binding. Positions 14, 41, 67, 71, 74, and 107 each coordinate NAD(+). Asn-71 is an FMN binding site. FMN contacts are provided by residues 165 to 166 (EG) and 205 to 207 (KSR).

Belongs to the nitroreductase family. Homodimer. FMN serves as cofactor.

Its function is as follows. Reduction of a variety of nitroaromatic compounds using NADH (and to lesser extent NADPH) as source of reducing equivalents; two electrons are transferred. The chain is Oxygen-insensitive NAD(P)H nitroreductase from Enterobacter cloacae.